The chain runs to 188 residues: ATP-dependent protease subunit HslV (188 aa).

The active site involves Thr8. Residues Ala165, Cys168, and Thr171 each contribute to the Na(+) site.

It belongs to the peptidase T1B family. HslV subfamily. As to quaternary structure, a double ring-shaped homohexamer of HslV is capped on each side by a ring-shaped HslU homohexamer. The assembly of the HslU/HslV complex is dependent on binding of ATP.

It localises to the cytoplasm. The enzyme catalyses ATP-dependent cleavage of peptide bonds with broad specificity.. Allosterically activated by HslU binding. Protease subunit of a proteasome-like degradation complex believed to be a general protein degrading machinery. The polypeptide is ATP-dependent protease subunit HslV (Neorickettsia sennetsu (strain ATCC VR-367 / Miyayama) (Ehrlichia sennetsu)).